Consider the following 535-residue polypeptide: GMP synthase [glutamine-hydrolyzing] (535 aa).

The region spanning 24–217 (KILIVDFGSQ…VRKVAGLKGD (194 aa)) is the Glutamine amidotransferase type-1 domain. The active-site Nucleophile is Cys-101. Residues His-191 and Glu-193 contribute to the active site. Positions 218–410 (WTMRAFREEA…LGLPEVFVGR (193 aa)) constitute a GMPS ATP-PPase domain. 245-251 (SGGVDSA) lines the ATP pocket.

As to quaternary structure, homodimer.

It carries out the reaction XMP + L-glutamine + ATP + H2O = GMP + L-glutamate + AMP + diphosphate + 2 H(+). It functions in the pathway purine metabolism; GMP biosynthesis; GMP from XMP (L-Gln route): step 1/1. Catalyzes the synthesis of GMP from XMP. The sequence is that of GMP synthase [glutamine-hydrolyzing] from Rhodopseudomonas palustris (strain BisB18).